Reading from the N-terminus, the 793-residue chain is Putative potassium transporter 8 (793 aa).

The Cytoplasmic portion of the chain corresponds to 1-22 (MDLEFGRGMRSPQRDSWKTTLL). The chain crosses the membrane as a helical span at residues 23 to 43 (LAYQSLGVVYGDLSISPLYVF). At 44–59 (KSTFAEDIQHSETNEE) the chain is on the extracellular side. The chain crosses the membrane as a helical span at residues 60-80 (IFGVLSFVFWTLTLIPLIKYV). Topologically, residues 81–151 (SIVLRADDNG…EKHKKLHTAL (71 aa)) are cytoplasmic. The helical transmembrane segment at 152-172 (LIMVLIGTCMVIGDGVLTPAI) threads the bilayer. Residues 173–191 (SVFSAVSGLEFSLSKDHRE) are Extracellular-facing. Residues 192-212 (YAVIPITCVILAFLFALQHYG) traverse the membrane as a helical segment. Over 213–215 (THR) the chain is Cytoplasmic. Residues 216-236 (VGFLFAPIVLAWLICMSALGL) form a helical membrane-spanning segment. Residues 237–264 (YNIIHWNPHVYQALNPCYMFKFLKKTRK) are Extracellular-facing. The chain crosses the membrane as a helical span at residues 265-285 (YGWMSLGGILLCMTGSEAMFA). Residues 286–292 (DLGHFSY) are Cytoplasmic-facing. The helical transmembrane segment at 293–313 (SAIQLAFTSLVYPALILAYMG) threads the bilayer. The Extracellular portion of the chain corresponds to 314 to 343 (QAAYLSKHHDFYSNSQVGFYIAVPDKVRWP). A helical membrane pass occupies residues 344–364 (VLVLAILASVVGSQAIISGTF). Residues 365-391 (SIINQSQSLSCFPRVKVVHTSDKIHGQ) are Cytoplasmic-facing. The chain crosses the membrane as a helical span at residues 392-412 (IYIPEINWLLMILCIAVTVGF). Over 413–422 (RDTKHMGNAS) the chain is Extracellular. Asparagine 420 is a glycosylation site (N-linked (GlcNAc...) asparagine). Residues 423 to 443 (GLAVITVMLVTTCLTSLVIML) traverse the membrane as a helical segment. Over 444 to 448 (CWRRP) the chain is Cytoplasmic. Residues 449-469 (PVLALCFLLFFGSVEALYFSA) form a helical membrane-spanning segment. Residues 470–473 (SLIK) lie on the Extracellular side of the membrane. The chain crosses the membrane as a helical span at residues 474 to 494 (FLEGAWLPILLALFLMAVMLV). Residues 495–793 (WHYTTIKKYE…LLEVGMVYVL (299 aa)) are Cytoplasmic-facing. Polar residues predominate over residues 664–675 (DSVQHSSAASVE). Residues 664–698 (DSVQHSSAASVETTTTRRRSGGGDDDGSPGGGGGR) are disordered.

It belongs to the HAK/KUP transporter (TC 2.A.72.3) family.

It is found in the membrane. In terms of biological role, high-affinity potassium transporter. This chain is Putative potassium transporter 8 (HAK8), found in Oryza sativa subsp. japonica (Rice).